A 1183-amino-acid chain; its full sequence is MAGQVVQYGRHRKRRNYARISEVLELPNLIEIQTKSYEWFLREGLIEMFRDISPIEDFTGNLSLEFVDYRLGEPKYDLEESKNRDATYAAPLRVKVRLIIKETGEVKEQEVFMGDFPLMTDTGTFVINGAERVIVSQLVRSPSVYFNEKIDKNGRENYDATIIPNRGAWLEYETDAKDVVYVRIDRTRKLPLTVLLRALGFSSDQEIVDLLGDNEYLRNTLEKDGTENTEQALLEIYERLRPGEPPTVENAKSLLYSRFFDPKRYDLASVGRYKTNKKLHLKHRLFNQKLAEPIVNTETGEIVVEEGTVLDRRKIDEIMDVLESNANSEVFELHGSVIDEPVEIQSIKVYVPNDDEGRTTTVIGNAFPDSEVKCITPADIIASMSYFFNLLSGIGYTDDIDHLGNRRLRSVGELLQNQFRIGLSRMERVVRERMSIQDTESITPQQLINIRPVIASIKEFFGSSQLSQFMDQANPLAELTHKRRLSALGPGGLTRERAQMEVRDVHYSHYGRMCPIETPEGPNIGLINSLSSYARVNEFGFIETPYRKVDLDTHAITDQIDYLTADEEDSYVVAQANSKLDENGRFMDDEVVCRFRGNNTVMAKEKMDYMDVSPKQVVSAATACIPFLENDDSNRALMGANMQRQAVPLMNPEAPFVGTGMEHVAARDSGAAITAKHRGRVEHVESNEILVRRLVEENGVEHEGELDRYPLAKFKRSNSGTCYNQRPIVAVGDVVEYNEILADGPSMELGEMALGRNVVVGFMTWDGYNYEDAVIMSERLVKDDVYTSIHIEEYESEARDTKLGPEEITRDIPNVSESALKNLDDRGIVYIGAEVKDGDILVGKVTPKGVTELTAEERLLHAIFGEKAREVRDTSLRVPHGAGGIVLDVKVFNREEGDDTLSPGVNQLVRVYIVQKRKIHVGDKMCGRHGNKGVISKIVPEEDMPYLPDGRPIDIMLNPLGVPSRMNIGQVLELHLGMAAKNLGIHVASPVFDGANDDDVWSTIEEAGMARDGKTVLYDGRTGEPFDNRISVGVMYMLKLAHMVDDKLHARSTGPYSLVTQQPLGGKAQFGGQRFGEMEVWALEAYGAAYTLQEILTYKSDDTVGRVKTYEAIVKGENISRPSVPESFRVLMKELQSLGLDVKVMDEQDNEIEMTDVDDDDVVERKVDLQQNDAPETQKEVTD.

It belongs to the RNA polymerase beta chain family. The RNAP catalytic core consists of 2 alpha, 1 beta, 1 beta' and 1 omega subunit. When a sigma factor is associated with the core the holoenzyme is formed, which can initiate transcription.

The catalysed reaction is RNA(n) + a ribonucleoside 5'-triphosphate = RNA(n+1) + diphosphate. In terms of biological role, DNA-dependent RNA polymerase catalyzes the transcription of DNA into RNA using the four ribonucleoside triphosphates as substrates. This is DNA-directed RNA polymerase subunit beta from Staphylococcus aureus (strain Mu3 / ATCC 700698).